We begin with the raw amino-acid sequence, 75 residues long: Carwaprin-b (75 aa).

Residues 1–24 form the signal peptide; it reads MSSGGLLLLLGLLTLWAELTPVSS. The 46-residue stretch at 27–72 folds into the WAP domain; that stretch reads RPKKPGLCPPRPQKPPCVRECKNDWRCPGEQKCCRYGCIYECRDPI. 4 cysteine pairs are disulfide-bonded: C34/C60, C43/C64, C47/C59, and C53/C68.

This sequence belongs to the venom waprin family. As to expression, expressed by the venom gland.

The protein localises to the secreted. Functionally, damages membranes of susceptible bacteria. Has no hemolytic activity. Not toxic to mice. Does not inhibit the proteinases elastase and cathepsin G. This Tropidechis carinatus (Australian rough-scaled snake) protein is Carwaprin-b.